A 221-amino-acid polypeptide reads, in one-letter code: Octanoyltransferase (221 aa).

The BPL/LPL catalytic domain occupies 38 to 220 (GEIPDTLLLL…GFREVLGDPG (183 aa)). Substrate contacts are provided by residues 84–91 (RGGDATFH), 149–151 (AIG), and 163–165 (GFA). Cysteine 181 functions as the Acyl-thioester intermediate in the catalytic mechanism.

The protein belongs to the LipB family.

Its subcellular location is the cytoplasm. The catalysed reaction is octanoyl-[ACP] + L-lysyl-[protein] = N(6)-octanoyl-L-lysyl-[protein] + holo-[ACP] + H(+). It participates in protein modification; protein lipoylation via endogenous pathway; protein N(6)-(lipoyl)lysine from octanoyl-[acyl-carrier-protein]: step 1/2. Catalyzes the transfer of endogenously produced octanoic acid from octanoyl-acyl-carrier-protein onto the lipoyl domains of lipoate-dependent enzymes. Lipoyl-ACP can also act as a substrate although octanoyl-ACP is likely to be the physiological substrate. The protein is Octanoyltransferase of Rubrobacter xylanophilus (strain DSM 9941 / JCM 11954 / NBRC 16129 / PRD-1).